The primary structure comprises 102 residues: Putative RNA-binding protein RbpA (102 aa).

One can recognise an RRM domain in the interval 2-79; the sequence is SIYVGNLSYE…RDLKVNKAKP (78 aa). The span at 73–84 shows a compositional bias: basic and acidic residues; it reads KVNKAKPREDRG. Residues 73–102 are disordered; sequence KVNKAKPREDRGPSGGNRGGYGGGGGRNRY. Residues 85–102 are compositionally biased toward gly residues; it reads PSGGNRGGYGGGGGRNRY.

In Nostoc sp. (strain PCC 7120 / SAG 25.82 / UTEX 2576), this protein is Putative RNA-binding protein RbpA (rbpA).